A 139-amino-acid polypeptide reads, in one-letter code: Acidic phospholipase A2 Ts-A4 (139 aa).

The first 16 residues, 1 to 16, serve as a signal peptide directing secretion; that stretch reads MRTLWILAVLLVGVEG. Intrachain disulfides connect C42/C132, C44/C60, C59/C111, C65/C139, C66/C104, C73/C97, and C91/C102. Ca(2+)-binding residues include Y43, G45, and G47. Residue H63 is part of the active site. D64 is a Ca(2+) binding site. Residue D105 is part of the active site.

Ca(2+) serves as cofactor. Expressed by the venom gland.

The protein resides in the secreted. It catalyses the reaction a 1,2-diacyl-sn-glycero-3-phosphocholine + H2O = a 1-acyl-sn-glycero-3-phosphocholine + a fatty acid + H(+). In terms of biological role, PLA2 catalyzes the calcium-dependent hydrolysis of the 2-acyl groups in 3-sn-phosphoglycerides. In Trimeresurus stejnegeri (Chinese green tree viper), this protein is Acidic phospholipase A2 Ts-A4.